The chain runs to 226 residues: MILHIPEVLSKEQLTECRNLLNKANWIDGKITAGNQAINAKNNFQLAESDPLTNYLRDIIKTALNSNPLFISAALPKHIISPFFNKYENGGNYGNHVDNSILFDMNEKKAFRTDISCSLFFTDPEEYEGGEMVIEDTFGTHEVKLPAGDLILYPSTSLHRVEPVTKGVRMVSFMWIQSMIRSAWKRSILFELDNTIQSLRVNYGEIEETLNLSIHYHKLIQEWSEL.

Residues 78 to 178 enclose the Fe2OG dioxygenase domain; that stretch reads HIISPFFNKY…RMVSFMWIQS (101 aa). Positions 96, 98, and 159 each coordinate Fe cation. Arg169 contributes to the 2-oxoglutarate binding site.

Requires Fe(2+) as cofactor. The cofactor is L-ascorbate.

The protein is PKHD-type hydroxylase Abu_0724 of Aliarcobacter butzleri (strain RM4018) (Arcobacter butzleri).